Here is a 157-residue protein sequence, read N- to C-terminus: Heavy metal-associated isoprenylated plant protein 16 (157 aa).

The region spanning 2–71 (KQKILIRIAM…KVAFAELVSV (70 aa)) is the HMA domain. The disordered stretch occupies residues 73 to 115 (KVEPPKDGDKKPEEEKKPEEKKPEEKKPEEKKPEPCCQPWQKP). Residues 75-106 (EPPKDGDKKPEEEKKPEEKKPEEKKPEEKKPE) are compositionally biased toward basic and acidic residues. Position 154 is a cysteine methyl ester (C154). The S-farnesyl cysteine moiety is linked to residue C154. Positions 155 to 157 (RIM) are cleaved as a propeptide — removed in mature form.

This sequence belongs to the HIPP family.

Functionally, probable heavy-metal-binding protein. The polypeptide is Heavy metal-associated isoprenylated plant protein 16 (Arabidopsis thaliana (Mouse-ear cress)).